Reading from the N-terminus, the 329-residue chain is Ketol-acid reductoisomerase (NADP(+)) (329 aa).

In terms of domain architecture, KARI N-terminal Rossmann spans threonine 2 to threonine 182. NADP(+) contacts are provided by residues tyrosine 25–glutamine 28, serine 51, serine 53, and aspartate 83–glutamine 86. Residue histidine 108 is part of the active site. Glycine 134 contacts NADP(+). A KARI C-terminal knotted domain is found at asparagine 183 to leucine 328. Residues aspartate 191, glutamate 195, glutamate 227, and glutamate 231 each contribute to the Mg(2+) site. Position 252 (serine 252) interacts with substrate.

It belongs to the ketol-acid reductoisomerase family. It depends on Mg(2+) as a cofactor.

It carries out the reaction (2R)-2,3-dihydroxy-3-methylbutanoate + NADP(+) = (2S)-2-acetolactate + NADPH + H(+). It catalyses the reaction (2R,3R)-2,3-dihydroxy-3-methylpentanoate + NADP(+) = (S)-2-ethyl-2-hydroxy-3-oxobutanoate + NADPH + H(+). It participates in amino-acid biosynthesis; L-isoleucine biosynthesis; L-isoleucine from 2-oxobutanoate: step 2/4. Its pathway is amino-acid biosynthesis; L-valine biosynthesis; L-valine from pyruvate: step 2/4. Involved in the biosynthesis of branched-chain amino acids (BCAA). Catalyzes an alkyl-migration followed by a ketol-acid reduction of (S)-2-acetolactate (S2AL) to yield (R)-2,3-dihydroxy-isovalerate. In the isomerase reaction, S2AL is rearranged via a Mg-dependent methyl migration to produce 3-hydroxy-3-methyl-2-ketobutyrate (HMKB). In the reductase reaction, this 2-ketoacid undergoes a metal-dependent reduction by NADPH to yield (R)-2,3-dihydroxy-isovalerate. In Prochlorococcus marinus subsp. pastoris (strain CCMP1986 / NIES-2087 / MED4), this protein is Ketol-acid reductoisomerase (NADP(+)).